Here is a 213-residue protein sequence, read N- to C-terminus: Protein-L-isoaspartate O-methyltransferase (213 aa).

Serine 61 is an active-site residue.

It belongs to the methyltransferase superfamily. L-isoaspartyl/D-aspartyl protein methyltransferase family.

The protein resides in the cytoplasm. It carries out the reaction [protein]-L-isoaspartate + S-adenosyl-L-methionine = [protein]-L-isoaspartate alpha-methyl ester + S-adenosyl-L-homocysteine. Catalyzes the methyl esterification of L-isoaspartyl residues in peptides and proteins that result from spontaneous decomposition of normal L-aspartyl and L-asparaginyl residues. It plays a role in the repair and/or degradation of damaged proteins. This is Protein-L-isoaspartate O-methyltransferase from Maricaulis maris (strain MCS10) (Caulobacter maris).